The chain runs to 470 residues: MGKTLFQKIWDAHTVGILPDGRTQMFIATHLLHEVTSPQAFGMVRDLGLTVRHPERTFATVDHIIPTDNQAEPFADATADAMIRELRRNCAENGIRFFDLPTGLQGIVHMVGPELGITQPGMTIVCGDSHTATHGAFGAIAMGIGTTQVRDVLATQTLALSPLKVRRINVNGKLAPGVRAKDVALHIIGLLGAKGGLGFAYEYGGEVIDAMSMDERMTLCNMSIEGAARCGYVNPDRTTVEYIKGRLFAPTGADWDKAVERWLGFASDADAEYDEIVEIDGASIEPTLTWGISPDQNTGISGSTPNPSDAADDDERKMINEALEYMKFPADMPLKGLPVQVCFVGSCTNGRISDFREVAALIKGRHVAPGIRALAVPGSQMTARQCEEEGIADIFREAGFEWRLAGCSMCLAMNPDKLQGDQLCASSSNRNFKGRQGSPTGRTLLMSPAMVAAAALTGKVSDAREVFSLN.

Over residues Pro-294–Pro-307 the composition is skewed to polar residues. The interval Pro-294 to Asp-313 is disordered. Residues Cys-347, Cys-407, and Cys-410 each contribute to the [4Fe-4S] cluster site.

Belongs to the aconitase/IPM isomerase family. LeuC type 1 subfamily. As to quaternary structure, heterodimer of LeuC and LeuD. It depends on [4Fe-4S] cluster as a cofactor.

The catalysed reaction is (2R,3S)-3-isopropylmalate = (2S)-2-isopropylmalate. It participates in amino-acid biosynthesis; L-leucine biosynthesis; L-leucine from 3-methyl-2-oxobutanoate: step 2/4. Catalyzes the isomerization between 2-isopropylmalate and 3-isopropylmalate, via the formation of 2-isopropylmaleate. The polypeptide is 3-isopropylmalate dehydratase large subunit (Akkermansia muciniphila (strain ATCC BAA-835 / DSM 22959 / JCM 33894 / BCRC 81048 / CCUG 64013 / CIP 107961 / Muc)).